The sequence spans 285 residues: Extracellular metalloprotease NCU07200 (285 aa).

The signal sequence occupies residues 1 to 18 (MQIKSFLLAAAAAPAALG). A Zn(2+)-binding site is contributed by His197. The active site involves Glu198. His201 is a binding site for Zn(2+). Cys233 and Cys260 are oxidised to a cystine. N-linked (GlcNAc...) asparagine glycosylation is present at Asn282.

Belongs to the peptidase M43B family.

The protein localises to the secreted. Its function is as follows. Secreted metalloproteinase that allows assimilation of proteinaceous substrates. This is Extracellular metalloprotease NCU07200 from Neurospora crassa (strain ATCC 24698 / 74-OR23-1A / CBS 708.71 / DSM 1257 / FGSC 987).